Consider the following 365-residue polypeptide: Metallophosphoesterase 1 homolog (365 aa).

A helical transmembrane segment spans residues 10-30; that stretch reads PILLAIILVVYNEYFIFFIAF. Positions 54, 96, 132, 208, 262, and 264 each coordinate a divalent metal cation. Residues 319–339 form a helical membrane-spanning segment; it reads ILQIMVYIFGGIGIVILAFIL.

Belongs to the metallophosphoesterase superfamily. MPPE1 family. Requires Mn(2+) as cofactor.

The protein resides in the endoplasmic reticulum-Golgi intermediate compartment membrane. It is found in the golgi apparatus. The protein localises to the cis-Golgi network membrane. Functionally, metallophosphoesterase required for transport of GPI-anchor proteins from the endoplasmic reticulum to the Golgi. Acts in lipid remodeling steps of GPI-anchor maturation by mediating the removal of a side-chain ethanolamine-phosphate (EtNP) from the second Man (Man2) of the GPI intermediate, an essential step for efficient transport of GPI-anchor proteins. The sequence is that of Metallophosphoesterase 1 homolog from Caenorhabditis elegans.